The primary structure comprises 98 residues: HssA/B-like protein 34 (98 aa).

Disordered regions lie at residues M1 to S26 and A60 to C98. A compositionally biased stretch (gly residues) spans A60–G72. Residues S73 to G88 are compositionally biased toward basic residues. Gly residues predominate over residues G89–C98.

The protein belongs to the hssA/B family.

The polypeptide is HssA/B-like protein 34 (hssl34) (Dictyostelium discoideum (Social amoeba)).